The chain runs to 89 residues: Small ribosomal subunit protein uS15 (89 aa).

This sequence belongs to the universal ribosomal protein uS15 family. As to quaternary structure, part of the 30S ribosomal subunit. Forms a bridge to the 50S subunit in the 70S ribosome, contacting the 23S rRNA.

Functionally, one of the primary rRNA binding proteins, it binds directly to 16S rRNA where it helps nucleate assembly of the platform of the 30S subunit by binding and bridging several RNA helices of the 16S rRNA. In terms of biological role, forms an intersubunit bridge (bridge B4) with the 23S rRNA of the 50S subunit in the ribosome. The sequence is that of Small ribosomal subunit protein uS15 from Latilactobacillus sakei subsp. sakei (strain 23K) (Lactobacillus sakei subsp. sakei).